The sequence spans 87 residues: Small ribosomal subunit protein uS17 (87 aa).

The protein belongs to the universal ribosomal protein uS17 family. In terms of assembly, part of the 30S ribosomal subunit.

Its function is as follows. One of the primary rRNA binding proteins, it binds specifically to the 5'-end of 16S ribosomal RNA. The polypeptide is Small ribosomal subunit protein uS17 (Anoxybacillus flavithermus (strain DSM 21510 / WK1)).